A 266-amino-acid chain; its full sequence is Ribosomal RNA small subunit methyltransferase J (266 aa).

S-adenosyl-L-methionine is bound by residues 109–110 (RD), 125–126 (ER), and Asp-185.

The protein belongs to the methyltransferase superfamily. RsmJ family.

The protein resides in the cytoplasm. The catalysed reaction is guanosine(1516) in 16S rRNA + S-adenosyl-L-methionine = N(2)-methylguanosine(1516) in 16S rRNA + S-adenosyl-L-homocysteine + H(+). Functionally, specifically methylates the guanosine in position 1516 of 16S rRNA. The protein is Ribosomal RNA small subunit methyltransferase J of Cellvibrio japonicus (strain Ueda107) (Pseudomonas fluorescens subsp. cellulosa).